We begin with the raw amino-acid sequence, 166 residues long: Protein-export protein SecB (166 aa).

This sequence belongs to the SecB family. In terms of assembly, homotetramer, a dimer of dimers. One homotetramer interacts with 1 SecA dimer.

Its subcellular location is the cytoplasm. Functionally, one of the proteins required for the normal export of preproteins out of the cell cytoplasm. It is a molecular chaperone that binds to a subset of precursor proteins, maintaining them in a translocation-competent state. It also specifically binds to its receptor SecA. The sequence is that of Protein-export protein SecB from Sinorhizobium fredii (strain NBRC 101917 / NGR234).